The sequence spans 126 residues: Probable glycine cleavage system H protein (126 aa).

In terms of domain architecture, Lipoyl-binding spans 24–106 (VVRVGITDFA…FGDGWLLEVE (83 aa)). Lys65 is subject to N6-lipoyllysine.

The protein belongs to the GcvH family. The glycine cleavage system is composed of four proteins: P, T, L and H. (R)-lipoate serves as cofactor.

Functionally, the glycine cleavage system catalyzes the degradation of glycine. The H protein shuttles the methylamine group of glycine from the P protein to the T protein. This Natronomonas pharaonis (strain ATCC 35678 / DSM 2160 / CIP 103997 / JCM 8858 / NBRC 14720 / NCIMB 2260 / Gabara) (Halobacterium pharaonis) protein is Probable glycine cleavage system H protein.